Here is a 62-residue protein sequence, read N- to C-terminus: Photosystem II reaction center protein Z (62 aa).

Helical transmembrane passes span 8–28 and 41–61; these read AVFA…VVFA and FSGT…NSLI.

Belongs to the PsbZ family. In terms of assembly, PSII is composed of 1 copy each of membrane proteins PsbA, PsbB, PsbC, PsbD, PsbE, PsbF, PsbH, PsbI, PsbJ, PsbK, PsbL, PsbM, PsbT, PsbY, PsbZ, Psb30/Ycf12, at least 3 peripheral proteins of the oxygen-evolving complex and a large number of cofactors. It forms dimeric complexes.

The protein resides in the plastid. It is found in the chloroplast thylakoid membrane. Functionally, may control the interaction of photosystem II (PSII) cores with the light-harvesting antenna, regulates electron flow through the 2 photosystem reaction centers. PSII is a light-driven water plastoquinone oxidoreductase, using light energy to abstract electrons from H(2)O, generating a proton gradient subsequently used for ATP formation. The polypeptide is Photosystem II reaction center protein Z (Pelargonium hortorum (Common geranium)).